Reading from the N-terminus, the 723-residue chain is MDSSIPDIPDDSLGLGAGGAQASSSACCAKRVNKRRAAPDFDDDDDGSKLFRCDDDGGGGDKERFARENHSEIERRRRNKMTAYITELSDMVPTCSALARKPDKLTILRMAVSHMKSLRGSGNTAADGTYKPSFLTDQELKHLILEAADGFLFVVSCESGRVVYVSDSLTPVLNQSQSDWLGSSLYDQLHPDDGDKLREQLSTAESNNTGRMLDLKTGTVKKEGQQSSVRMCMGARRSFICRMRCGSCPVEPMSMNRLNFLRSRNRNGLGPPKDGEPQYVVVHCTGYIKSWPPTGVNLTDEEADNILGSRYCLVAIGRLQVTSCPSDTDMNSISVPVEFISRHNCQGLFTFVDHRCMATVGYQPQELLGKNILELAHPEDQELLRDSFQQVVKLKGQVLSVMFRFLSKTRDWLWIRTSSFTFQNPFSEEIEYIICTNANVKQLQQQQAELGGGGRDGLYEAGQVTLPQMPVQAVTAAGTDHSKTMDKAEMHPSMYPNPDQAKFLPSTSAPGVPIYPQDNNNYTTANRSNDTYSRSVGMAPQMVQPSHSAGQVLAQMSRQNGAPPSNSSPLQGGAAVSWPGPAAGARPPFNNQQVVPQAGKALSPQFAMGSFVGGSSSSFGAMPTTAAPTPTMGANYPNINPRATLNTNGYDGLGSGQQFPSRAVEAVWPQWQGQQQAQNRAEQHPHTQNNQPDIFPDVLAMLDQPANFNNDDFEIPIYPSFNE.

Residues 1 to 23 form a disordered region; sequence MDSSIPDIPDDSLGLGAGGAQAS. Residues 65–118 form the bHLH domain; it reads FARENHSEIERRRRNKMTAYITELSDMVPTCSALARKPDKLTILRMAVSHMKSL. 2 PAS domains span residues 137–208 and 325–395; these read DQEL…ESNN and PSDT…VKLK. Positions 400–443 constitute a PAC domain; the sequence is SVMFRFLSKTRDWLWIRTSSFTFQNPFSEEIEYIICTNANVKQL. Disordered regions lie at residues 487–509, 557–592, and 670–694; these read KAEM…STSA, SRQN…FNNQ, and QWQG…QPDI. A compositionally biased stretch (polar residues) spans 557 to 570; that stretch reads SRQNGAPPSNSSPL. The span at 670–680 shows a compositional bias: low complexity; the sequence is QWQGQQQAQNR.

As to quaternary structure, efficient DNA-binding requires dimerization with another bHLH protein. Heterodimer with the aryl hydrocarbon receptor (AHR). In day 23 embryos, expressed at highest levels in brain, spinal cord and epithelial cells of developing gill. Expressed at higher levels throughout all tissues in day 27 and 35 sac fry, predominantly in brain and spinal cord. In the adult, isoform 1 is widely expressed (at protein level) and is detected in liver, gill, gonad, brain, kidney, heart, spleen and muscle. Isoform 2 is expressed (at protein level) only in gills with highest expression in the epithelial cells surrounding the gill lamellae.

The protein resides in the nucleus. Required for activity of the AHR. Upon ligand binding, AHR translocates into the nucleus, where it heterodimerizes with ARNT and induces transcription by binding to xenobiotic response elements (XRE). Not required for the ligand-binding subunit to translocate from the cytosol to the nucleus after ligand binding. The complex initiates transcription of genes involved in the regulation of a variety of biological processes, including angiogenesis, hematopoiesis, drug and lipid metabolism, cell motility and immune modulation. The heterodimer binds to core DNA sequence 5'-TACGTG-3' within the hypoxia response element (HRE) of target gene promoters and functions as a transcriptional regulator of the adaptive response to hypoxia. The heterodimer ARNT:AHR binds to core DNA sequence 5'-TGCGTG-3' within the dioxin response element (DRE) of target gene promoters and activates their transcription. Its function is as follows. Has reduced affinity for the XRE and functions negatively in AHR-mediated signaling by disrupting the binding of dimers formed by isoform 1 and AHR to the XRE. This is Aryl hydrocarbon receptor nuclear translocator (arnt) from Oncorhynchus mykiss (Rainbow trout).